Here is a 221-residue protein sequence, read N- to C-terminus: Cytochrome c biogenesis ATP-binding export protein CcmA (221 aa).

Positions 14 to 221 (LACHDVSCLR…FDLLDESHFS (208 aa)) constitute an ABC transporter domain. An ATP-binding site is contributed by 46–53 (GANGIGKS).

This sequence belongs to the ABC transporter superfamily. CcmA exporter (TC 3.A.1.107) family. As to quaternary structure, the complex is composed of two ATP-binding proteins (CcmA) and two transmembrane proteins (CcmB).

It localises to the cell inner membrane. The catalysed reaction is heme b(in) + ATP + H2O = heme b(out) + ADP + phosphate + H(+). Part of the ABC transporter complex CcmAB involved in the biogenesis of c-type cytochromes; once thought to export heme, this seems not to be the case, but its exact role is uncertain. Responsible for energy coupling to the transport system. In Zymomonas mobilis subsp. mobilis (strain ATCC 31821 / ZM4 / CP4), this protein is Cytochrome c biogenesis ATP-binding export protein CcmA.